The chain runs to 292 residues: Succinate dehydrogenase assembly factor 2, mitochondrial (292 aa).

2 disordered regions span residues 27–68 (RSFG…NTTS) and 266–292 (TGFH…VFDS). The span at 55 to 68 (TNRPPNQHVPNTTS) shows a compositional bias: polar residues.

This sequence belongs to the SDHAF2 family. Interacts with the flavoprotein subunit within the SDH catalytic dimer.

It localises to the mitochondrion matrix. Its function is as follows. Plays an essential role in the assembly of succinate dehydrogenase (SDH), an enzyme complex (also referred to as respiratory complex II) that is a component of both the tricarboxylic acid (TCA) cycle and the mitochondrial electron transport chain, and which couples the oxidation of succinate to fumarate with the reduction of ubiquinone (coenzyme Q) to ubiquinol. Required for flavinylation (covalent attachment of FAD) of the flavoprotein subunit of the SDH catalytic dimer. This chain is Succinate dehydrogenase assembly factor 2, mitochondrial, found in Aspergillus flavus (strain ATCC 200026 / FGSC A1120 / IAM 13836 / NRRL 3357 / JCM 12722 / SRRC 167).